Consider the following 353-residue polypeptide: MTIALGKFTKEEKDLFDIMDDWLRRDRFVFVGWSGLLLFPCAYFALGGWFTGTTFVTSWYTHGLASSYLEGCNFLTAAVSTPANSLAHSLLLLWGPEAQGDFTRWCQLGGLWTFVALHGAFGLIGFMLRQFELARSVQLRPYNAIAFSAPIAVFVSVFLIYPLGQSGWFFAPSFGVAAIFRFILFFQGFHNWTLNPFHMMGVAGVLGAALLCAIHGATVENTLFEDGDGANTFRAFNPTQAEETYSMVTANRFWSQIFGVAFSNKRWLHFFMLFVPVTGLWMSALGVVGLALNLRAYDFVSQEIRAAEDPEFETFYTKNILLNEGIRAWMAAQDQPHENLIFPEEVLPRGNAL.

Thr2 is subject to N-acetylthreonine. Thr2 carries the post-translational modification Phosphothreonine. A helical transmembrane segment spans residues 41-61 (CAYFALGGWFTGTTFVTSWYT). Residue His118 participates in chlorophyll a binding. The helical transmembrane segment at 125 to 141 (GFMLRQFELARSVQLRP) threads the bilayer. The pheophytin a site is built by Gln130 and Asn143. A helical membrane pass occupies residues 153–166 (VFVSVFLIYPLGQS). His198 contributes to the chlorophyll a binding site. Residues 208 to 228 (AALLCAIHGATVENTLFEDGD) traverse the membrane as a helical segment. A plastoquinone is bound by residues His215 and Phe262. His215 provides a ligand contact to Fe cation. His269 contributes to the Fe cation binding site. A helical membrane pass occupies residues 279–295 (GLWMSALGVVGLALNLR).

The protein belongs to the reaction center PufL/M/PsbA/D family. In terms of assembly, PSII is composed of 1 copy each of membrane proteins PsbA, PsbB, PsbC, PsbD, PsbE, PsbF, PsbH, PsbI, PsbJ, PsbK, PsbL, PsbM, PsbT, PsbX, PsbY, PsbZ, Psb30/Ycf12, at least 3 peripheral proteins of the oxygen-evolving complex and a large number of cofactors. It forms dimeric complexes. It depends on The D1/D2 heterodimer binds P680, chlorophylls that are the primary electron donor of PSII, and subsequent electron acceptors. It shares a non-heme iron and each subunit binds pheophytin, quinone, additional chlorophylls, carotenoids and lipids. There is also a Cl(-1) ion associated with D1 and D2, which is required for oxygen evolution. The PSII complex binds additional chlorophylls, carotenoids and specific lipids. as a cofactor.

It localises to the plastid. The protein localises to the chloroplast thylakoid membrane. The enzyme catalyses 2 a plastoquinone + 4 hnu + 2 H2O = 2 a plastoquinol + O2. Functionally, photosystem II (PSII) is a light-driven water:plastoquinone oxidoreductase that uses light energy to abstract electrons from H(2)O, generating O(2) and a proton gradient subsequently used for ATP formation. It consists of a core antenna complex that captures photons, and an electron transfer chain that converts photonic excitation into a charge separation. The D1/D2 (PsbA/PsbD) reaction center heterodimer binds P680, the primary electron donor of PSII as well as several subsequent electron acceptors. D2 is needed for assembly of a stable PSII complex. The chain is Photosystem II D2 protein from Citrus sinensis (Sweet orange).